A 415-amino-acid polypeptide reads, in one-letter code: Transposase for insertion sequence element IS1081 (415 aa).

The protein belongs to the transposase mutator family.

In terms of biological role, required for the transposition of the insertion element. The protein is Transposase for insertion sequence element IS1081 of Mycobacterium bovis (strain ATCC BAA-935 / AF2122/97).